The following is a 173-amino-acid chain: Ribosome maturation factor RimM (173 aa).

The region spanning 95–173 (EGEYYWRQLE…LMVVDWDPDF (79 aa)) is the PRC barrel domain.

Belongs to the RimM family. Binds ribosomal protein uS19.

It is found in the cytoplasm. In terms of biological role, an accessory protein needed during the final step in the assembly of 30S ribosomal subunit, possibly for assembly of the head region. Essential for efficient processing of 16S rRNA. May be needed both before and after RbfA during the maturation of 16S rRNA. It has affinity for free ribosomal 30S subunits but not for 70S ribosomes. The chain is Ribosome maturation factor RimM from Hahella chejuensis (strain KCTC 2396).